The sequence spans 385 residues: Tryptophan--tRNA ligase (385 aa).

The 'HIGH' region motif lies at 89-98 (PSSKTMHIGH). The 'KMSKS' region motif lies at 268–272 (KMSAS).

This sequence belongs to the class-I aminoacyl-tRNA synthetase family. As to quaternary structure, homodimer.

It catalyses the reaction tRNA(Trp) + L-tryptophan + ATP = L-tryptophyl-tRNA(Trp) + AMP + diphosphate + H(+). This chain is Tryptophan--tRNA ligase, found in Encephalitozoon cuniculi (strain GB-M1) (Microsporidian parasite).